Here is a 633-residue protein sequence, read N- to C-terminus: 1-deoxy-D-xylulose-5-phosphate synthase (633 aa).

Thiamine diphosphate is bound by residues His-74 and 115-117 (GHA). A Mg(2+)-binding site is contributed by Asp-146. Thiamine diphosphate is bound by residues 147 to 148 (GA), Asn-175, Tyr-286, and Glu-363. Asn-175 provides a ligand contact to Mg(2+).

The protein belongs to the transketolase family. DXPS subfamily. Homodimer. Mg(2+) is required as a cofactor. Requires thiamine diphosphate as cofactor.

The enzyme catalyses D-glyceraldehyde 3-phosphate + pyruvate + H(+) = 1-deoxy-D-xylulose 5-phosphate + CO2. The protein operates within metabolic intermediate biosynthesis; 1-deoxy-D-xylulose 5-phosphate biosynthesis; 1-deoxy-D-xylulose 5-phosphate from D-glyceraldehyde 3-phosphate and pyruvate: step 1/1. Functionally, catalyzes the acyloin condensation reaction between C atoms 2 and 3 of pyruvate and glyceraldehyde 3-phosphate to yield 1-deoxy-D-xylulose-5-phosphate (DXP). In Dehalococcoides mccartyi (strain ATCC BAA-2100 / JCM 16839 / KCTC 5957 / BAV1), this protein is 1-deoxy-D-xylulose-5-phosphate synthase.